The following is a 528-amino-acid chain: PH domain-containing protein DDB_G0267786 (528 aa).

One can recognise a PH domain in the interval 59–180 (SDVFSGYLVK…WIEIFKTCCR (122 aa)).

This chain is PH domain-containing protein DDB_G0267786, found in Dictyostelium discoideum (Social amoeba).